The following is a 397-amino-acid chain: CCA-adding enzyme (397 aa).

Residues Gly-26 and Arg-29 each coordinate ATP. Positions 26 and 29 each coordinate CTP. Positions 39 and 41 each coordinate Mg(2+). ATP is bound by residues Arg-110, Asp-153, Arg-156, Arg-159, and Arg-162. Residues Arg-110, Asp-153, Arg-156, Arg-159, and Arg-162 each contribute to the CTP site.

The protein belongs to the tRNA nucleotidyltransferase/poly(A) polymerase family. Bacterial CCA-adding enzyme type 3 subfamily. Homodimer. The cofactor is Mg(2+).

The catalysed reaction is a tRNA precursor + 2 CTP + ATP = a tRNA with a 3' CCA end + 3 diphosphate. The enzyme catalyses a tRNA with a 3' CCA end + 2 CTP + ATP = a tRNA with a 3' CCACCA end + 3 diphosphate. Functionally, catalyzes the addition and repair of the essential 3'-terminal CCA sequence in tRNAs without using a nucleic acid template. Adds these three nucleotides in the order of C, C, and A to the tRNA nucleotide-73, using CTP and ATP as substrates and producing inorganic pyrophosphate. tRNA 3'-terminal CCA addition is required both for tRNA processing and repair. Also involved in tRNA surveillance by mediating tandem CCA addition to generate a CCACCA at the 3' terminus of unstable tRNAs. While stable tRNAs receive only 3'-terminal CCA, unstable tRNAs are marked with CCACCA and rapidly degraded. This is CCA-adding enzyme from Bacillus cereus (strain G9842).